The primary structure comprises 1253 residues: Methionine synthase (1253 aa).

The region spanning glutamine 6–valine 326 is the Hcy-binding domain. Zn(2+) is bound by residues cysteine 248, cysteine 311, and cysteine 312. One can recognise a Pterin-binding domain in the interval phenylalanine 359–glutamate 620. (6S)-5,6,7,8-tetrahydrofolate-binding positions include glycine 370–lysine 372, aspartate 437, asparagine 458, aspartate 525, asparagine 567, arginine 573, and arginine 579. Positions glutamine 650 to arginine 747 constitute a B12-binding N-terminal domain. Residues glutamate 697, glycine 770–aspartate 774, histidine 773, serine 818, threonine 822, and alanine 874 contribute to the methylcob(III)alamin site. Residues glutamine 760 to glutamate 895 enclose the B12-binding domain. The 343-residue stretch at serine 911–aspartate 1253 folds into the AdoMet activation domain. Residues aspartate 962, arginine 1160, and tyrosine 1215 to phenylalanine 1216 each bind S-adenosyl-L-methionine. A Phosphothreonine modification is found at threonine 1252.

This sequence belongs to the vitamin-B12 dependent methionine synthase family. As to quaternary structure, monomer. Dimer. Forms a multiprotein complex with MMACHC, MMADHC and MTRR. Methylcob(III)alamin serves as cofactor. The cofactor is Zn(2+).

It localises to the cytoplasm. It catalyses the reaction (6S)-5-methyl-5,6,7,8-tetrahydrofolate + L-homocysteine = (6S)-5,6,7,8-tetrahydrofolate + L-methionine. Its pathway is amino-acid biosynthesis; L-methionine biosynthesis via de novo pathway; L-methionine from L-homocysteine (MetH route): step 1/1. Its function is as follows. Catalyzes the transfer of a methyl group from methylcob(III)alamin (MeCbl) to homocysteine, yielding enzyme-bound cob(I)alamin and methionine in the cytosol. MeCbl is an active form of cobalamin (vitamin B12) used as a cofactor for methionine biosynthesis. Cob(I)alamin form is regenerated to MeCbl by a transfer of a methyl group from 5-methyltetrahydrofolate. The processing of cobalamin in the cytosol occurs in a multiprotein complex composed of at least MMACHC, MMADHC, MTRR (methionine synthase reductase) and MTR which may contribute to shuttle safely and efficiently cobalamin towards MTR in order to produce methionine. This is Methionine synthase (Mtr) from Rattus norvegicus (Rat).